Reading from the N-terminus, the 354-residue chain is MFLRTQMEQSQADIFALIKPHFGVMESSASYLPGFFMTFLLLQTTVLTQAMSLDIQINIQVPDTEGVLLECTSGSLIPPAEMTWRDSKGNIIPHSTTFDSQDRAGLLYLKSSILLKNRVQSPITCSIYNVTTNREKKRSVVLPDILFKSEYMSLMSNKFSCPLTYLFIIIFLNCLKGMLDFCCLKGKPVYFRELINKIKEVLNIKMRACCTLIWEFLLIVLYIAFLPFYLKFRSRASILDDAYPLHSNWLWDICIVLSVLMIFFTGLSLFLLWTLNCYGQMSYLPSMSMDLSKHDFEQNSSKSSEFQENYDVSCEIFLGTFEETIFSQHQESCIEDSFNPLQPLRLDCSLNWKT.

The first 52 residues, 1 to 52 (MFLRTQMEQSQADIFALIKPHFGVMESSASYLPGFFMTFLLLQTTVLTQAMS), serve as a signal peptide directing secretion. Residues 53–141 (LDIQINIQVP…TNREKKRSVV (89 aa)) enclose the Ig-like V-type domain. Residues 53-158 (LDIQINIQVP…SEYMSLMSNK (106 aa)) are Extracellular-facing. A disulfide bridge links cysteine 71 with cysteine 125. An N-linked (GlcNAc...) asparagine glycan is attached at asparagine 129. The chain crosses the membrane as a helical span at residues 159-179 (FSCPLTYLFIIIFLNCLKGML). Over 180–209 (DFCCLKGKPVYFRELINKIKEVLNIKMRAC) the chain is Cytoplasmic. A helical transmembrane segment spans residues 210–230 (CTLIWEFLLIVLYIAFLPFYL). The Extracellular portion of the chain corresponds to 231-252 (KFRSRASILDDAYPLHSNWLWD). Residues 253–273 (ICIVLSVLMIFFTGLSLFLLW) form a helical membrane-spanning segment. Over 274–354 (TLNCYGQMSY…RLDCSLNWKT (81 aa)) the chain is Cytoplasmic.

The protein belongs to the SKINT family. In terms of tissue distribution, expressed in skin and thymus.

It is found in the membrane. Functionally, may act by engaging a cell surface molecule on immature T-cells in the embryonic thymus. This is Selection and upkeep of intraepithelial T-cells protein 10 (Skint10) from Mus musculus (Mouse).